Here is a 407-residue protein sequence, read N- to C-terminus: Nicotinate phosphoribosyltransferase (407 aa).

His-224 carries the phosphohistidine; by autocatalysis modification.

It belongs to the NAPRTase family. Transiently phosphorylated on a His residue during the reaction cycle. Phosphorylation strongly increases the affinity for substrates and increases the rate of nicotinate D-ribonucleotide production. Dephosphorylation regenerates the low-affinity form of the enzyme, leading to product release.

The enzyme catalyses nicotinate + 5-phospho-alpha-D-ribose 1-diphosphate + ATP + H2O = nicotinate beta-D-ribonucleotide + ADP + phosphate + diphosphate. It functions in the pathway cofactor biosynthesis; NAD(+) biosynthesis; nicotinate D-ribonucleotide from nicotinate: step 1/1. In terms of biological role, catalyzes the synthesis of beta-nicotinate D-ribonucleotide from nicotinate and 5-phospho-D-ribose 1-phosphate at the expense of ATP. The sequence is that of Nicotinate phosphoribosyltransferase from Pseudomonas savastanoi pv. phaseolicola (strain 1448A / Race 6) (Pseudomonas syringae pv. phaseolicola (strain 1448A / Race 6)).